Reading from the N-terminus, the 302-residue chain is Forkhead box protein R2 (302 aa).

A DNA-binding region (fork-head) is located at residues 183–285 (RPPLNYSHLV…RVLAYARRES (103 aa)).

It localises to the nucleus. In Mus musculus (Mouse), this protein is Forkhead box protein R2 (Foxr2).